We begin with the raw amino-acid sequence, 647 residues long: Nucleoside triphosphatase I (647 aa).

Residues 48-212 (FIGLKNLNSM…NNLIGLLRPN (165 aa)) enclose the Helicase ATP-binding domain. 61–68 (WDTGTGKT) lines the ATP pocket. The DEXH box motif lies at 150–153 (DEVH). The Helicase C-terminal domain occupies 378–541 (YIEACRIILN…KINVVFDLLK (164 aa)). The tract at residues 467–533 (DIIILDMPWN…DIIKNKQGKI (67 aa)) is binding to the cap-specific mRNA (nucleoside-2'-O-)-methyltransferase.

It belongs to the helicase family. NPH I subfamily. As to quaternary structure, monomer. Interacts (via C-terminus) with RAP94 (via N-terminus). Interacts with the cap-specific mRNA (nucleoside-2'-O-)-methyltransferase.

It is found in the virion. The catalysed reaction is a ribonucleoside 5'-triphosphate + H2O = a ribonucleoside 5'-diphosphate + phosphate + H(+). In terms of biological role, DNA-dependent ATPase required for providing the needed energy to achieve the termination of early transcripts. Acts in concert with the RAP94 subunit of the virion RNA polymerase and the capping enzyme/VTF to catalyze release of UUUUUNU-containing nascent RNA from the elongation complex. NPH-I must bind ssDNA in order to exhibit ATPase activity. This chain is Nucleoside triphosphatase I (NPH1), found in Choristoneura fumiferana (Spruce budworm moth).